Reading from the N-terminus, the 534-residue chain is Autophagic-related protein 16.2 (534 aa).

WD repeat units lie at residues 243 to 281 (THDG…TDAS), 288 to 329 (GCLG…STFS), 330 to 368 (GHTD…CLKS), 371 to 411 (VGST…ATYS), 413 to 452 (ELGQ…IIHL), 459 to 498 (KTSC…LEKV), and 504 to 534 (SDSA…TLWR).

This sequence belongs to the WD repeat tipD family. As to quaternary structure, homodimer (via N-terminus). Most likely a component of a complex at least containing atg-5, lgg-3, atg-16.1 and/or atg-16.2. Interacts (via N-terminus) with atg-16.1 (via N-terminus). Interacts (via N-terminus) with atg-5. Interacts (via WD 5-6 repeats) with lgg-2; the interaction is direct. Expressed in neurons, pharyngeal muscles, body wall muscle cells and intestinal cells.

It localises to the cytoplasm. Its subcellular location is the cell membrane. Most likely a component of the atg-5-atg-12-atg-16.1/atg-16.2 complex, which is recruited to the preautophagosomal membrane and associates with lgg-2 to promote autophagosome formation. Plays a role in the recruitment of lipidated lgg-1 probably to the autophagosome membrane to promote autophagosome formation. Furthermore, association with atg-5 is required for the nucleation of lgg-1 positive autophagosomes. Although its role in autophagosome formation may be distinct to the role of atg-16.2, it functions in a partially redundant manner with atg-16.1 to regulate autophagic processes. In a daf-18/PTEN- and daf-16/FOXO-dependent manner, required for maintaining the numbers of germ stem cell progenitors in the gonad during the late phases of larval development. This is Autophagic-related protein 16.2 from Caenorhabditis elegans.